A 250-amino-acid polypeptide reads, in one-letter code: Pre-protein VI (250 aa).

The propeptide occupies methionine 1–glycine 33. The tract at residues alanine 34–tyrosine 54 is amphipathic alpha-helix essential for membrane lytic activity. Residues serine 36–asparagine 53 are involved in endosomal membrane lysis. The tract at residues glycine 48–glutamine 74 is interaction with hexon protein. The Nuclear export signal motif lies at leucine 67–phenylalanine 76. Positions isoleucine 103–proline 148 are disordered. Position 124 is a phosphoserine; by host (serine 124). Over residues glycine 127–threonine 140 the composition is skewed to basic and acidic residues. Residues lysine 131–proline 135 carry the Nuclear localization signal motif. A Phosphothreonine; by host modification is found at threonine 143. A PPXY motif motif is present at residues proline 148–tyrosine 151. The Nuclear export signal motif lies at serine 231–glutamine 242. The interval leucine 233 to leucine 239 is interaction with hexon protein. Residues glycine 240–phenylalanine 250 form a binds to importin alpha/beta, involved in hexon nuclear import region. The Nuclear localization signal signature appears at lysine 245 to arginine 248.

Belongs to the adenoviridae protein VI family. Interacts with hexon protein; this interaction allows nuclear import of hexon trimers and possibly pre-capsid assembly. Interacts (via C-terminal NLS) with importin alpha/beta. In terms of assembly, interacts (via PPxY motif) with host NEDD4 ubiquitine ligase; this interaction might play a role in virus intracellular transport during entry. Part of a complex composed of the core-capsid bridging protein, the endosome lysis protein VI and the hexon-linking protein VIII; these interactions bridge the virus core to the capsid. Interacts with peripentonal hexons; this interaction stabilizes the capsid by gluing two peripentonal hexons together and joining them with an adjacent group-of-nine hexon. As to quaternary structure, heterodimer with the viral protease; disulfide-linked. Interacts with the viral protease. In terms of processing, ubiquitinated by Nedd4 following partial capsid disassembly; which might play a role in intracellular virus movement during entry. Post-translationally, contains the major nuclear import and export signals. Proteolytically removed during virion maturation. The processing of the C-terminus turns the precursor into a mature viral structural protein and abrogates its ability to promote hexon import and act as a potential chaperone protein.

The protein localises to the host nucleus. It localises to the host cytoplasm. Its subcellular location is the virion. In terms of biological role, during virus assembly, promotes hexon trimers nuclear import through nuclear pore complexes via an importin alpha/beta-dependent mechanism. By analogy to herpesviruses capsid assembly, might act as a chaperone to promote the formation of the icosahedral capsid. Its function is as follows. Structural component of the virion that provides increased stability to the particle shell through its interaction with the core-capsid bridging protein and the hexon-linking protein VIII. Fibers shedding during virus entry into host cell allows the endosome lysis protein to be exposed as a membrane-lytic peptide. Exhibits pH-independent membrane fragmentation activity and probably mediates viral rapid escape from host endosome via organellar membrane lysis. It is not clear if it then remains partially associated with the capsid and involved in the intracellular microtubule-dependent transport of capsid to the nucleus, or if it is lost during endosomal penetration. Functionally, cofactor that activates the viral protease. Binds to viral protease in a 1:1 ratio. This Homo sapiens (Human) protein is Pre-protein VI.